Here is a 152-residue protein sequence, read N- to C-terminus: SsrA-binding protein (152 aa).

A disordered region spans residues 122-152 (KGKKNHDKRETEAARDWQRDKARLMKGDRGD). Over residues 128 to 152 (DKRETEAARDWQRDKARLMKGDRGD) the composition is skewed to basic and acidic residues.

It belongs to the SmpB family.

Its subcellular location is the cytoplasm. Functionally, required for rescue of stalled ribosomes mediated by trans-translation. Binds to transfer-messenger RNA (tmRNA), required for stable association of tmRNA with ribosomes. tmRNA and SmpB together mimic tRNA shape, replacing the anticodon stem-loop with SmpB. tmRNA is encoded by the ssrA gene; the 2 termini fold to resemble tRNA(Ala) and it encodes a 'tag peptide', a short internal open reading frame. During trans-translation Ala-aminoacylated tmRNA acts like a tRNA, entering the A-site of stalled ribosomes, displacing the stalled mRNA. The ribosome then switches to translate the ORF on the tmRNA; the nascent peptide is terminated with the 'tag peptide' encoded by the tmRNA and targeted for degradation. The ribosome is freed to recommence translation, which seems to be the essential function of trans-translation. This Caulobacter sp. (strain K31) protein is SsrA-binding protein.